Here is a 301-residue protein sequence, read N- to C-terminus: TLR adapter interacting with SLC15A4 on the lysosome (301 aa).

Residues 290 to 294 carry the pLxIS motif motif; that stretch reads SLHIS. A Phosphoserine modification is found at S294.

As to quaternary structure, interacts (via pLxIS motif) with IRF5; leading to IRF5 activation. Interacts with SLC15A4; leading to its recruitment to endolysosome. Post-translationally, the phosphorylated pLxIS motif constitutes an IRF5-binding motif, leading to recruitment of the transcription factor IRF5 to induce type-I interferons and other cytokines. In terms of tissue distribution, highly expressed in immune cell types such as B-cells, neutrophils, dendritic cells and monocytes, the expression levels are two-three-fold higher in female cells compared to male cells (at protein level). Expressed at low levels in T-cells and NK cells.

The protein localises to the lysosome membrane. It is found in the endosome membrane. The protein resides in the nucleus. Its subcellular location is the cytoplasm. In terms of biological role, innate immune adapter that mediates the recruitment and activation of IRF5 downstream of endolysosomal toll-like receptors TLR7, TLR8 and TLR9. Following recruitment to endolysosome by SLC15A4 downstream of TLR7, TLR8 and TLR9, specifically recruits IRF5 transcription factor via its pLxIS motif, leading to IRF5 activation and subsequent expression of type I interferons. Plays a role in the regulation of endolysosomal pH in immune cells such as B-cells, dendritic cells and monocytes. In Homo sapiens (Human), this protein is TLR adapter interacting with SLC15A4 on the lysosome.